Here is a 330-residue protein sequence, read N- to C-terminus: SUMO-activating enzyme subunit 1 (330 aa).

This sequence belongs to the ubiquitin-activating E1 family. As to quaternary structure, heterodimer of sae1 and sae2. The complex binds sumo via sae2.

Its subcellular location is the nucleus. The protein operates within protein modification; protein sumoylation. The dimeric enzyme acts as an E1 ligase for sumo. It mediates ATP-dependent activation of sumo and formation of a thioester with a conserved cysteine residue on sae2. In Dictyostelium discoideum (Social amoeba), this protein is SUMO-activating enzyme subunit 1 (sae1).